We begin with the raw amino-acid sequence, 728 residues long: 1,4-alpha-glucan branching enzyme GlgB (728 aa).

The Nucleophile role is filled by Asp-405. The active-site Proton donor is the Glu-458.

It belongs to the glycosyl hydrolase 13 family. GlgB subfamily. Monomer.

It carries out the reaction Transfers a segment of a (1-&gt;4)-alpha-D-glucan chain to a primary hydroxy group in a similar glucan chain.. It functions in the pathway glycan biosynthesis; glycogen biosynthesis. Its function is as follows. Catalyzes the formation of the alpha-1,6-glucosidic linkages in glycogen by scission of a 1,4-alpha-linked oligosaccharide from growing alpha-1,4-glucan chains and the subsequent attachment of the oligosaccharide to the alpha-1,6 position. This Shigella dysenteriae serotype 1 (strain Sd197) protein is 1,4-alpha-glucan branching enzyme GlgB.